An 837-amino-acid polypeptide reads, in one-letter code: PE-PGRS family protein PE_PGRS4 (837 aa).

Positions 4-94 (VIAAPEVIAA…GAYAAAEAAA (91 aa)) constitute a PE domain. Positions 811–825 (NGGKAGGTPGAGGTS) are enriched in gly residues. Residues 811-837 (NGGKAGGTPGAGGTSGLIIGENGLNGL) are disordered. Positions 826–837 (GLIIGENGLNGL) are enriched in low complexity.

Belongs to the mycobacterial PE family. PGRS subfamily.

This is PE-PGRS family protein PE_PGRS4 from Mycobacterium tuberculosis (strain ATCC 25618 / H37Rv).